A 131-amino-acid polypeptide reads, in one-letter code: Ribosome-binding factor A (131 aa).

This sequence belongs to the RbfA family. As to quaternary structure, monomer. Binds 30S ribosomal subunits, but not 50S ribosomal subunits or 70S ribosomes.

It is found in the cytoplasm. Its function is as follows. One of several proteins that assist in the late maturation steps of the functional core of the 30S ribosomal subunit. Associates with free 30S ribosomal subunits (but not with 30S subunits that are part of 70S ribosomes or polysomes). Required for efficient processing of 16S rRNA. May interact with the 5'-terminal helix region of 16S rRNA. The chain is Ribosome-binding factor A from Thermotoga petrophila (strain ATCC BAA-488 / DSM 13995 / JCM 10881 / RKU-1).